The following is a 72-amino-acid chain: MAKEEAIEIEGVILDALPNAQFKVKLENGLEVLAHVSGKIRMHYIRILAGDKVKVQISPYDITKGRITYRYK.

Positions 1–72 (MAKEEAIEIE…TKGRITYRYK (72 aa)) constitute an S1-like domain.

This sequence belongs to the IF-1 family. Component of the 30S ribosomal translation pre-initiation complex which assembles on the 30S ribosome in the order IF-2 and IF-3, IF-1 and N-formylmethionyl-tRNA(fMet); mRNA recruitment can occur at any time during PIC assembly.

Its subcellular location is the cytoplasm. One of the essential components for the initiation of protein synthesis. Stabilizes the binding of IF-2 and IF-3 on the 30S subunit to which N-formylmethionyl-tRNA(fMet) subsequently binds. Helps modulate mRNA selection, yielding the 30S pre-initiation complex (PIC). Upon addition of the 50S ribosomal subunit IF-1, IF-2 and IF-3 are released leaving the mature 70S translation initiation complex. The protein is Translation initiation factor IF-1 of Chlorobium phaeobacteroides (strain DSM 266 / SMG 266 / 2430).